The chain runs to 303 residues: Coenzyme PQQ synthesis protein B (303 aa).

It belongs to the PqqB family.

Its pathway is cofactor biosynthesis; pyrroloquinoline quinone biosynthesis. Its function is as follows. May be involved in the transport of PQQ or its precursor to the periplasm. The chain is Coenzyme PQQ synthesis protein B from Pseudomonas putida (strain W619).